Here is a 266-residue protein sequence, read N- to C-terminus: Dolichol-phosphate mannosyltransferase subunit 1 (266 aa).

Low complexity predominate over residues 1–19 (MASPGASRGASAATAAAAS). The disordered stretch occupies residues 1–31 (MASPGASRGASAATAAAASPRPPQGRSSRRD). Ala2 is subject to N-acetylalanine. Ser3 is modified (phosphoserine). GDP-alpha-D-mannose is bound by residues Pro38, Tyr40, Glu42, Ile69, Asp71, Asp124, Ala125, Asp126, Arg153, Arg240, and Lys246. A Mg(2+)-binding site is contributed by Asp126. A Mn(2+)-binding site is contributed by Asp126.

Belongs to the glycosyltransferase 2 family. In terms of assembly, component of the dolichol-phosphate mannose (DPM) synthase complex composed of DPM1, DPM2 and DPM3; within the complex, directly interacts with DPM3. This interaction may stabilize DPM1. It depends on Mg(2+) as a cofactor. Mn(2+) is required as a cofactor. Requires Ca(2+) as cofactor.

It is found in the endoplasmic reticulum. The catalysed reaction is a di-trans,poly-cis-dolichyl phosphate + GDP-alpha-D-mannose = a di-trans,poly-cis-dolichyl beta-D-mannosyl phosphate + GDP. It functions in the pathway protein modification; protein glycosylation. Its function is as follows. Transfers mannose from GDP-mannose to dolichol monophosphate to form dolichol phosphate mannose (Dol-P-Man) which is the mannosyl donor in pathways leading to N-glycosylation, glycosyl phosphatidylinositol membrane anchoring, and O-mannosylation of proteins; catalytic subunit of the dolichol-phosphate mannose (DPM) synthase complex. The chain is Dolichol-phosphate mannosyltransferase subunit 1 (DPM1) from Cricetulus griseus (Chinese hamster).